We begin with the raw amino-acid sequence, 450 residues long: tRNA modification GTPase MnmE (450 aa).

Residues arginine 25, glutamate 86, and arginine 126 each coordinate (6S)-5-formyl-5,6,7,8-tetrahydrofolate. The region spanning 221-373 is the TrmE-type G domain; it reads GLRVALVGRP…LVQALLERCG (153 aa). Residue asparagine 231 participates in K(+) binding. Residues 231–236, 250–256, 275–278, and 336–339 contribute to the GTP site; these read NVGKSS, TDLPGTT, DTAG, and NKAD. Residue serine 235 participates in Mg(2+) binding. Residues threonine 250, leucine 252, and threonine 255 each coordinate K(+). Mg(2+) is bound at residue threonine 256. Lysine 450 provides a ligand contact to (6S)-5-formyl-5,6,7,8-tetrahydrofolate.

It belongs to the TRAFAC class TrmE-Era-EngA-EngB-Septin-like GTPase superfamily. TrmE GTPase family. In terms of assembly, homodimer. Heterotetramer of two MnmE and two MnmG subunits. K(+) serves as cofactor.

The protein resides in the cytoplasm. Exhibits a very high intrinsic GTPase hydrolysis rate. Involved in the addition of a carboxymethylaminomethyl (cmnm) group at the wobble position (U34) of certain tRNAs, forming tRNA-cmnm(5)s(2)U34. This chain is tRNA modification GTPase MnmE, found in Synechococcus sp. (strain CC9605).